Consider the following 406-residue polypeptide: MTFSVDKVRADFPVLSREVNGLPLAYLDSAASAQKPSQVIDAEAEFYRHGYAAVHRGIHTLSAQATEKMENVRKRASLFINARSAEELVFVRGTTEGINLVANSWGNSNVRAGDNIIISQMEHHANIVPWQMLCARVGAELRVIPLNPDGTLQLETLPTLFDEKTRLLAITHVSNVLGTENPLAEMITLAHQHGTKVLVDGAQAVMHHPVDVQALDCDFYVFSGHKLYGPTGIGILYVKEALLQEMPPWEGGGSMIATVSLSEGTTWTKAPWRFEAGTPNTGGIIGLGAALEYVSALGLNNIAEYEQNLMHYALSQLESVPDLTLYGPQNRLGVIAFNLGKHHAYDVGSFLDNYGIAVRTGHHCAMPLMAYYNVPAMCRASLAMYNTHEEVDRLVTGLQRIHRLLG.

K226 carries the N6-(pyridoxal phosphate)lysine modification. Residue C364 is the Cysteine persulfide intermediate of the active site.

This sequence belongs to the class-V pyridoxal-phosphate-dependent aminotransferase family. Csd subfamily. In terms of assembly, homodimer. Interacts with SufE and the SufBCD complex composed of SufB, SufC and SufD. The interaction with SufE is required to mediate the direct transfer of the sulfur atom from the S-sulfanylcysteine. Requires pyridoxal 5'-phosphate as cofactor.

It is found in the cytoplasm. It carries out the reaction (sulfur carrier)-H + L-cysteine = (sulfur carrier)-SH + L-alanine. The catalysed reaction is L-selenocysteine + AH2 = hydrogenselenide + L-alanine + A + H(+). Its pathway is cofactor biosynthesis; iron-sulfur cluster biosynthesis. Its function is as follows. Cysteine desulfurases mobilize the sulfur from L-cysteine to yield L-alanine, an essential step in sulfur metabolism for biosynthesis of a variety of sulfur-containing biomolecules. Component of the suf operon, which is activated and required under specific conditions such as oxidative stress and iron limitation. Acts as a potent selenocysteine lyase in vitro, that mobilizes selenium from L-selenocysteine. Selenocysteine lyase activity is however unsure in vivo. The protein is Cysteine desulfurase of Escherichia coli O17:K52:H18 (strain UMN026 / ExPEC).